The sequence spans 144 residues: Large ribosomal subunit protein uL15 (144 aa).

The interval 1–58 (MKLNNLSPAPGSKHAEKRVGRGIGSGLGKTGGRGHKGQKSRSGGSVKPGFEGGQMPLQ) is disordered. Gly residues predominate over residues 21 to 31 (RGIGSGLGKTG).

The protein belongs to the universal ribosomal protein uL15 family. In terms of assembly, part of the 50S ribosomal subunit.

Functionally, binds to the 23S rRNA. The polypeptide is Large ribosomal subunit protein uL15 (Chromohalobacter salexigens (strain ATCC BAA-138 / DSM 3043 / CIP 106854 / NCIMB 13768 / 1H11)).